Consider the following 204-residue polypeptide: uncharacterized protein (204 aa).

A helical transmembrane segment spans residues G160–V180.

To M.pneumoniae MPN_373 C-terminal region.

It localises to the cell membrane. This is an uncharacterized protein from Mycoplasma pneumoniae (strain ATCC 29342 / M129 / Subtype 1) (Mycoplasmoides pneumoniae).